Consider the following 541-residue polypeptide: Protein wntless homolog (541 aa).

At 1-15 the chain is on the cytoplasmic side; that stretch reads MAGAIIENMSTKKLC. The chain crosses the membrane as a helical span at residues 16 to 36; it reads IVGGILLVFQIVAFLVGGLIA. The Lumenal segment spans residues 37 to 232; it reads PAPTTAVPYT…GIHQNGGFTK (196 aa). The tract at residues 101 to 232 is interaction with Wnt proteins; that stretch reads MEMSPWFQFM…GIHQNGGFTK (132 aa). The helical transmembrane segment at 233-253 threads the bilayer; that stretch reads VWFAMKTFLTPSIFIIMVWYW. Residues 254-268 are Cytoplasmic-facing; sequence RRITMMSRPPVLLEK. A helical membrane pass occupies residues 269–289; that stretch reads VIFALGISMTFINIPVEWFSI. Over 290–303 the chain is Lumenal; it reads GFDWTWMLLFGDIR. A helical membrane pass occupies residues 304–324; that stretch reads QGIFYAMLLSFWIIFCGEHMM. The Cytoplasmic segment spans residues 325–331; that stretch reads DQHERNH. A helical transmembrane segment spans residues 332–352; it reads IAGYWKQVGPIAVGSFCLFIF. Over 353 to 380 the chain is Lumenal; it reads DMCERGVQLTNPFYSIWTTDVGTELAMA. A helical transmembrane segment spans residues 381–401; the sequence is FIIVAGICLCLYFLFLCFMVF. Residues 402 to 431 are Cytoplasmic-facing; it reads QVFRNISGKQSSLPAMSKVRRLHYEGLIFR. The helical transmembrane segment at 432–452 threads the bilayer; the sequence is FKFLMLITLACAAMTVIFFIV. At 453-471 the chain is on the lumenal side; the sequence is SQVSEGHWKWGGVTVQVSS. A helical transmembrane segment spans residues 472–492; sequence AFFTGIYGMWNLYVFALMFLY. At 493–541 the chain is on the cytoplasmic side; the sequence is APSHKNYGEDQSNGDLGVHSGEELQLTTTITHVDGPTEIYKLTRKEAQE.

This sequence belongs to the wntless family. As to quaternary structure, interacts with WNT3A. Interacts with WNT1, WNT3 and WNT5. N-glycosylated. In terms of tissue distribution, expressed in the brain, skeletal muscle, heart muscle, lung, gut, liver, and kidney (at protein level). In the brain, expressed in the cortex, striatum, hippocampus and to a lesser extent in the cerebellum (at protein level). Expressed in kidney, lung, skin, intestine, brain, spinal cord, skeleton, eyes, excretion glands, tooth and palatal shelves. In the cerebellum, expressed in Purkinje cells.

The protein resides in the golgi apparatus membrane. It is found in the cytoplasmic vesicle membrane. The protein localises to the cell membrane. Its subcellular location is the endoplasmic reticulum membrane. It localises to the early endosome membrane. In terms of biological role, regulates Wnt proteins sorting and secretion in a feedback regulatory mechanism. This reciprocal interaction plays a key role in the regulation of expression, subcellular location, binding and organelle-specific association of Wnt proteins. Also plays an important role in establishment of the anterior-posterior body axis formation during development. This chain is Protein wntless homolog (Wls), found in Mus musculus (Mouse).